The chain runs to 223 residues: Triosephosphate isomerase (223 aa).

Substrate is bound at residue 6 to 8 (NLK). His86 (electrophile) is an active-site residue. Glu151 functions as the Proton acceptor in the catalytic mechanism. 2 residues coordinate substrate: Gly157 and Ser187.

This sequence belongs to the triosephosphate isomerase family. Homodimer.

Its subcellular location is the cytoplasm. It carries out the reaction D-glyceraldehyde 3-phosphate = dihydroxyacetone phosphate. The protein operates within carbohydrate biosynthesis; gluconeogenesis. It participates in carbohydrate degradation; glycolysis; D-glyceraldehyde 3-phosphate from glycerone phosphate: step 1/1. In terms of biological role, involved in the gluconeogenesis. Catalyzes stereospecifically the conversion of dihydroxyacetone phosphate (DHAP) to D-glyceraldehyde-3-phosphate (G3P). This Campylobacter jejuni subsp. doylei (strain ATCC BAA-1458 / RM4099 / 269.97) protein is Triosephosphate isomerase.